The following is a 473-amino-acid chain: Pyruvate kinase (473 aa).

Substrate is bound at residue arginine 32. Residues asparagine 34, serine 36, aspartate 66, and threonine 67 each contribute to the K(+) site. 34–37 contacts ATP; that stretch reads NFSH. Residues arginine 73 and lysine 155 each coordinate ATP. Glutamate 221 provides a ligand contact to Mg(2+). Residues glycine 244, aspartate 245, and threonine 277 each coordinate substrate. Aspartate 245 is a binding site for Mg(2+).

It belongs to the pyruvate kinase family. In terms of assembly, homotetramer. Requires Mg(2+) as cofactor. K(+) is required as a cofactor.

The catalysed reaction is pyruvate + ATP = phosphoenolpyruvate + ADP + H(+). It functions in the pathway carbohydrate degradation; glycolysis; pyruvate from D-glyceraldehyde 3-phosphate: step 5/5. This is Pyruvate kinase (pyk) from Clostridium acetobutylicum (strain ATCC 824 / DSM 792 / JCM 1419 / IAM 19013 / LMG 5710 / NBRC 13948 / NRRL B-527 / VKM B-1787 / 2291 / W).